A 465-amino-acid chain; its full sequence is Na(+)-translocating NADH-quinone reductase subunit A (465 aa).

Belongs to the NqrA family. Composed of six subunits; NqrA, NqrB, NqrC, NqrD, NqrE and NqrF.

The catalysed reaction is a ubiquinone + n Na(+)(in) + NADH + H(+) = a ubiquinol + n Na(+)(out) + NAD(+). NQR complex catalyzes the reduction of ubiquinone-1 to ubiquinol by two successive reactions, coupled with the transport of Na(+) ions from the cytoplasm to the periplasm. NqrA to NqrE are probably involved in the second step, the conversion of ubisemiquinone to ubiquinol. This Chlamydia muridarum (strain MoPn / Nigg) protein is Na(+)-translocating NADH-quinone reductase subunit A.